The sequence spans 118 residues: Holo-[acyl-carrier-protein] synthase (118 aa).

Mg(2+)-binding residues include D5 and E50.

The protein belongs to the P-Pant transferase superfamily. AcpS family. Mg(2+) serves as cofactor.

The protein resides in the cytoplasm. It catalyses the reaction apo-[ACP] + CoA = holo-[ACP] + adenosine 3',5'-bisphosphate + H(+). Its function is as follows. Transfers the 4'-phosphopantetheine moiety from coenzyme A to a Ser of acyl-carrier-protein. This chain is Holo-[acyl-carrier-protein] synthase, found in Wolinella succinogenes (strain ATCC 29543 / DSM 1740 / CCUG 13145 / JCM 31913 / LMG 7466 / NCTC 11488 / FDC 602W) (Vibrio succinogenes).